Reading from the N-terminus, the 490-residue chain is Betaine aldehyde dehydrogenase (490 aa).

Positions 26, 27, and 93 each coordinate K(+). Residue G150–W152 participates in NAD(+) binding. K162 functions as the Charge relay system in the catalytic mechanism. K176 to E179 contributes to the NAD(+) binding site. Residue V180 participates in K(+) binding. Position 230-233 (G230–S233) interacts with NAD(+). K(+) is bound at residue L246. Residue E252 is the Proton acceptor of the active site. NAD(+)-binding residues include G254, C286, and E387. The active-site Nucleophile is C286. C286 bears the Cysteine sulfenic acid (-SOH) mark. The K(+) site is built by K457 and G460. The Charge relay system role is filled by E464.

Belongs to the aldehyde dehydrogenase family. As to quaternary structure, dimer of dimers. K(+) is required as a cofactor.

The enzyme catalyses betaine aldehyde + NAD(+) + H2O = glycine betaine + NADH + 2 H(+). The protein operates within amine and polyamine biosynthesis; betaine biosynthesis via choline pathway; betaine from betaine aldehyde: step 1/1. Involved in the biosynthesis of the osmoprotectant glycine betaine. Catalyzes the irreversible oxidation of betaine aldehyde to the corresponding acid. The sequence is that of Betaine aldehyde dehydrogenase from Escherichia coli (strain SE11).